The sequence spans 144 residues: Transcriptional regulator SlyA (144 aa).

Residues 2–135 (ESPLGSDLAR…LSNMIAKLEK (134 aa)) form the HTH marR-type domain. Positions 49-72 (QIQLAKAIGIEQPSLVRTLDQLEE) form a DNA-binding region, H-T-H motif.

Belongs to the SlyA family. In terms of assembly, homodimer.

Its function is as follows. Transcription regulator that can specifically activate or repress expression of target genes. The chain is Transcriptional regulator SlyA from Sodalis glossinidius (strain morsitans).